The primary structure comprises 612 residues: UvrABC system protein C (612 aa).

The 79-residue stretch at 21-99 (HQPGVYRMYD…IKKYRPRYNV (79 aa)) folds into the GIY-YIG domain. Residues 208–243 (QQVIDELMNKMEQASTDLDFERAARFRDQIAALRKT) enclose the UVR domain.

This sequence belongs to the UvrC family. As to quaternary structure, interacts with UvrB in an incision complex.

It localises to the cytoplasm. Its function is as follows. The UvrABC repair system catalyzes the recognition and processing of DNA lesions. UvrC both incises the 5' and 3' sides of the lesion. The N-terminal half is responsible for the 3' incision and the C-terminal half is responsible for the 5' incision. This Idiomarina loihiensis (strain ATCC BAA-735 / DSM 15497 / L2-TR) protein is UvrABC system protein C.